The sequence spans 890 residues: Tyrosine-protein kinase receptor TYRO3 (890 aa).

Residues 1 to 40 form the signal peptide; sequence MALRRSMGRPGLPPLPLPPPPRLGLLLAALASLLLPESAA. 2 consecutive Ig-like C2-type domains span residues 41-128 and 139-220; these read AGLK…TEIS and PFFT…ATVH. At 41–429 the chain is on the extracellular side; it reads AGLKLMGAPV…QGPPHSRTSW (389 aa). N63 carries N-linked (GlcNAc...) asparagine glycosylation. 2 cysteine pairs are disulfide-bonded: C64-C117 and C160-C203. 6 N-linked (GlcNAc...) asparagine glycosylation sites follow: N191, N230, N240, N293, N366, and N380. 2 Fibronectin type-III domains span residues 227–320 and 325–416; these read APFN…TKGL and APQN…SHDR. A helical transmembrane segment spans residues 430-450; that stretch reads VPVVLGVLTALVTAAALALIL. Over 451-890 the chain is Cytoplasmic; that stretch reads LRKRRKETRF…QQGLLPHSSC (440 aa). Position 466 is a phosphoserine (S466). The 273-residue stretch at 518 to 790 folds into the Protein kinase domain; that stretch reads FTLGRMLGKG…CLRMELENIL (273 aa). ATP is bound by residues 524–532 and K550; that span reads LGKGEFGSV. D655 functions as the Proton acceptor in the catalytic mechanism. Residues Y681, Y685, Y686, and Y804 each carry the phosphotyrosine; by autocatalysis modification. 2 disordered regions span residues 815 to 837 and 851 to 871; these read AGGS…GSGM and LTPG…ESPL. 2 positions are modified to phosphoserine: S818 and S869.

This sequence belongs to the protein kinase superfamily. Tyr protein kinase family. AXL/UFO subfamily. As to quaternary structure, monomer and homodimer. Interacts (via N-terminus) with extracellular ligands TULP1 and GAS6. Interacts with PIK3R1; this interaction increases PI3-kinase activity. Post-translationally, autophosphorylated. As to expression, abundant in the brain and lower levels in other tissues.

It is found in the cell membrane. It carries out the reaction L-tyrosyl-[protein] + ATP = O-phospho-L-tyrosyl-[protein] + ADP + H(+). Functionally, receptor tyrosine kinase that transduces signals from the extracellular matrix into the cytoplasm by binding to several ligands including TULP1 or GAS6. Regulates many physiological processes including cell survival, migration and differentiation. Ligand binding at the cell surface induces dimerization and autophosphorylation of TYRO3 on its intracellular domain that provides docking sites for downstream signaling molecules. Following activation by ligand, interacts with PIK3R1 and thereby enhances PI3-kinase activity. Activates the AKT survival pathway, including nuclear translocation of NF-kappa-B and up-regulation of transcription of NF-kappa-B-regulated genes. TYRO3 signaling plays a role in various processes such as neuron protection from excitotoxic injury, platelet aggregation and cytoskeleton reorganization. Also plays an important role in inhibition of Toll-like receptors (TLRs)-mediated innate immune response by activating STAT1, which selectively induces production of suppressors of cytokine signaling SOCS1 and SOCS3. In terms of biological role, (Microbial infection) Acts as a receptor for lassa virus and lymphocytic choriomeningitis virus, possibly through GAS6 binding to phosphatidyl-serine at the surface of virion envelope. (Microbial infection) Acts as a receptor for Ebolavirus, possibly through GAS6 binding to phosphatidyl-serine at the surface of virion envelope. This chain is Tyrosine-protein kinase receptor TYRO3 (TYRO3), found in Homo sapiens (Human).